The sequence spans 457 residues: Siroheme synthase (457 aa).

A precorrin-2 dehydrogenase /sirohydrochlorin ferrochelatase region spans residues 1 to 204 (MDHLPIFCQL…ADEKAVNATT (204 aa)). Residues 22–23 (DV) and 43–44 (LT) each bind NAD(+). S128 carries the post-translational modification Phosphoserine. A uroporphyrinogen-III C-methyltransferase region spans residues 216-457 (GEVVLVGAGP…RDKLNWFSNY (242 aa)). P225 provides a ligand contact to S-adenosyl-L-methionine. D248 functions as the Proton acceptor in the catalytic mechanism. K270 functions as the Proton donor in the catalytic mechanism. S-adenosyl-L-methionine-binding positions include 301 to 303 (GGD), I306, 331 to 332 (TA), M382, and G411.

In the N-terminal section; belongs to the precorrin-2 dehydrogenase / sirohydrochlorin ferrochelatase family. This sequence in the C-terminal section; belongs to the precorrin methyltransferase family.

The catalysed reaction is uroporphyrinogen III + 2 S-adenosyl-L-methionine = precorrin-2 + 2 S-adenosyl-L-homocysteine + H(+). It catalyses the reaction precorrin-2 + NAD(+) = sirohydrochlorin + NADH + 2 H(+). The enzyme catalyses siroheme + 2 H(+) = sirohydrochlorin + Fe(2+). The protein operates within cofactor biosynthesis; adenosylcobalamin biosynthesis; precorrin-2 from uroporphyrinogen III: step 1/1. It functions in the pathway cofactor biosynthesis; adenosylcobalamin biosynthesis; sirohydrochlorin from precorrin-2: step 1/1. It participates in porphyrin-containing compound metabolism; siroheme biosynthesis; precorrin-2 from uroporphyrinogen III: step 1/1. Its pathway is porphyrin-containing compound metabolism; siroheme biosynthesis; siroheme from sirohydrochlorin: step 1/1. The protein operates within porphyrin-containing compound metabolism; siroheme biosynthesis; sirohydrochlorin from precorrin-2: step 1/1. In terms of biological role, multifunctional enzyme that catalyzes the SAM-dependent methylations of uroporphyrinogen III at position C-2 and C-7 to form precorrin-2 via precorrin-1. Then it catalyzes the NAD-dependent ring dehydrogenation of precorrin-2 to yield sirohydrochlorin. Finally, it catalyzes the ferrochelation of sirohydrochlorin to yield siroheme. The sequence is that of Siroheme synthase from Salmonella choleraesuis (strain SC-B67).